A 164-amino-acid polypeptide reads, in one-letter code: Cytochrome c-type biogenesis protein CcmE (164 aa).

At 1–8 the chain is on the cytoplasmic side; that stretch reads MNPRRKKR. The chain crosses the membrane as a helical; Signal-anchor for type II membrane protein span at residues 9–29; it reads LTLAVALIGGVAAIASLLLYA. The Periplasmic segment spans residues 30-164; the sequence is LNSNLNLFFT…EDQSKAGGYK (135 aa). Heme is bound by residues His-131 and Tyr-135. A disordered region spans residues 140-164; the sequence is VAEAMGQSHEKLDYSEDQSKAGGYK. Residues 147-158 are compositionally biased toward basic and acidic residues; it reads SHEKLDYSEDQS.

This sequence belongs to the CcmE/CycJ family.

Its subcellular location is the cell inner membrane. Heme chaperone required for the biogenesis of c-type cytochromes. Transiently binds heme delivered by CcmC and transfers the heme to apo-cytochromes in a process facilitated by CcmF and CcmH. This Shewanella piezotolerans (strain WP3 / JCM 13877) protein is Cytochrome c-type biogenesis protein CcmE.